A 182-amino-acid chain; its full sequence is Dephospho-CoA kinase (182 aa).

Positions 4–182 (VVAITGGIGS…IINNDHKIMT (179 aa)) constitute a DPCK domain. Position 12-17 (12-17 (GSGKTT)) interacts with ATP.

Belongs to the CoaE family.

It is found in the cytoplasm. The enzyme catalyses 3'-dephospho-CoA + ATP = ADP + CoA + H(+). It participates in cofactor biosynthesis; coenzyme A biosynthesis; CoA from (R)-pantothenate: step 5/5. Functionally, catalyzes the phosphorylation of the 3'-hydroxyl group of dephosphocoenzyme A to form coenzyme A. The sequence is that of Dephospho-CoA kinase from Aliivibrio fischeri (strain ATCC 700601 / ES114) (Vibrio fischeri).